The primary structure comprises 580 residues: Amino-acid acetyltransferase, mitochondrial (580 aa).

Residues 403–560 (LTMQNLFDDK…KLRHQNGVVD (158 aa)) enclose the N-acetyltransferase domain.

It belongs to the acetyltransferase family.

It localises to the mitochondrion. The enzyme catalyses L-glutamate + acetyl-CoA = N-acetyl-L-glutamate + CoA + H(+). Its pathway is amino-acid biosynthesis; L-arginine biosynthesis; N(2)-acetyl-L-ornithine from L-glutamate: step 1/4. N-acetylglutamate synthase involved in arginine biosynthesis. The chain is Amino-acid acetyltransferase, mitochondrial (ARG2) from Candida albicans (strain SC5314 / ATCC MYA-2876) (Yeast).